Consider the following 592-residue polypeptide: NADH-quinone oxidoreductase subunit C/D (592 aa).

An NADH dehydrogenase I subunit C region spans residues methionine 1–glutamine 183. An NADH dehydrogenase I subunit D region spans residues aspartate 207–arginine 592.

This sequence in the N-terminal section; belongs to the complex I 30 kDa subunit family. In the C-terminal section; belongs to the complex I 49 kDa subunit family. As to quaternary structure, NDH-1 is composed of 13 different subunits. Subunits NuoB, CD, E, F, and G constitute the peripheral sector of the complex.

Its subcellular location is the cell inner membrane. The enzyme catalyses a quinone + NADH + 5 H(+)(in) = a quinol + NAD(+) + 4 H(+)(out). In terms of biological role, NDH-1 shuttles electrons from NADH, via FMN and iron-sulfur (Fe-S) centers, to quinones in the respiratory chain. The immediate electron acceptor for the enzyme in this species is believed to be ubiquinone. Couples the redox reaction to proton translocation (for every two electrons transferred, four hydrogen ions are translocated across the cytoplasmic membrane), and thus conserves the redox energy in a proton gradient. The polypeptide is NADH-quinone oxidoreductase subunit C/D (Chromohalobacter salexigens (strain ATCC BAA-138 / DSM 3043 / CIP 106854 / NCIMB 13768 / 1H11)).